We begin with the raw amino-acid sequence, 133 residues long: Large ribosomal subunit protein uL22 (133 aa).

This sequence belongs to the universal ribosomal protein uL22 family. As to quaternary structure, part of the 50S ribosomal subunit.

Functionally, this protein binds specifically to 23S rRNA; its binding is stimulated by other ribosomal proteins, e.g. L4, L17, and L20. It is important during the early stages of 50S assembly. It makes multiple contacts with different domains of the 23S rRNA in the assembled 50S subunit and ribosome. The globular domain of the protein is located near the polypeptide exit tunnel on the outside of the subunit, while an extended beta-hairpin is found that lines the wall of the exit tunnel in the center of the 70S ribosome. The chain is Large ribosomal subunit protein uL22 from Aquifex pyrophilus.